We begin with the raw amino-acid sequence, 380 residues long: Chorismate synthase (380 aa).

R47 is an NADP(+) binding site. FMN contacts are provided by residues 124 to 126 (RSS), G288, 303 to 307 (KPTST), and R329.

The protein belongs to the chorismate synthase family. As to quaternary structure, homotetramer. Requires FMNH2 as cofactor.

It catalyses the reaction 5-O-(1-carboxyvinyl)-3-phosphoshikimate = chorismate + phosphate. It participates in metabolic intermediate biosynthesis; chorismate biosynthesis; chorismate from D-erythrose 4-phosphate and phosphoenolpyruvate: step 7/7. Catalyzes the anti-1,4-elimination of the C-3 phosphate and the C-6 proR hydrogen from 5-enolpyruvylshikimate-3-phosphate (EPSP) to yield chorismate, which is the branch point compound that serves as the starting substrate for the three terminal pathways of aromatic amino acid biosynthesis. This reaction introduces a second double bond into the aromatic ring system. This Leptospira interrogans serogroup Icterohaemorrhagiae serovar copenhageni (strain Fiocruz L1-130) protein is Chorismate synthase.